The following is a 377-amino-acid chain: Nitric oxide reductase FlRd-NAD(+) reductase (377 aa).

Belongs to the FAD-dependent oxidoreductase family. It depends on FAD as a cofactor.

It localises to the cytoplasm. The enzyme catalyses 2 reduced [nitric oxide reductase rubredoxin domain] + NAD(+) + H(+) = 2 oxidized [nitric oxide reductase rubredoxin domain] + NADH. It functions in the pathway nitrogen metabolism; nitric oxide reduction. Functionally, one of at least two accessory proteins for anaerobic nitric oxide (NO) reductase. Reduces the rubredoxin moiety of NO reductase. The protein is Nitric oxide reductase FlRd-NAD(+) reductase of Citrobacter koseri (strain ATCC BAA-895 / CDC 4225-83 / SGSC4696).